A 75-amino-acid chain; its full sequence is MEEVPFENAMQRLEEIVDLMNQPTTSLDASLALYEEADALMRICESRIRQVEQRVRELAEKRHESSLFEEQAVVR.

The protein belongs to the XseB family. Heterooligomer composed of large and small subunits.

The protein resides in the cytoplasm. It carries out the reaction Exonucleolytic cleavage in either 5'- to 3'- or 3'- to 5'-direction to yield nucleoside 5'-phosphates.. Bidirectionally degrades single-stranded DNA into large acid-insoluble oligonucleotides, which are then degraded further into small acid-soluble oligonucleotides. In Chlamydia pneumoniae (Chlamydophila pneumoniae), this protein is Exodeoxyribonuclease 7 small subunit.